Here is a 319-residue protein sequence, read N- to C-terminus: Cell division protein FtsQ (319 aa).

Positions 1-53 (MDSREDMVPDVLLEAPNPRRRQSADTSTERPTRPARREQGYARVTPRGERMGN) are disordered. The Cytoplasmic portion of the chain corresponds to 1 to 70 (MDSREDMVPD…PDFFAWFDPR (70 aa)). Over residues 27 to 52 (STERPTRPARREQGYARVTPRGERMG) the composition is skewed to basic and acidic residues. Residues 71–87 (WLWVPLMVCLAVGGYWA) traverse the membrane as a helical segment. Residues 88 to 319 (YEPLEKLLER…NATRNAPTHP (232 aa)) lie on the Periplasmic side of the membrane. The POTRA domain maps to 97 to 166 (RPFKSVVVEG…DTLVVKIAEQ (70 aa)).

This sequence belongs to the FtsQ/DivIB family. FtsQ subfamily. As to quaternary structure, part of a complex composed of FtsB, FtsL and FtsQ.

The protein localises to the cell inner membrane. Its function is as follows. Essential cell division protein. May link together the upstream cell division proteins, which are predominantly cytoplasmic, with the downstream cell division proteins, which are predominantly periplasmic. May control correct divisome assembly. This Cellvibrio japonicus (strain Ueda107) (Pseudomonas fluorescens subsp. cellulosa) protein is Cell division protein FtsQ.